Here is a 365-residue protein sequence, read N- to C-terminus: UPF0718 protein MJ0584 (365 aa).

The next 11 membrane-spanning stretches (helical) occupy residues 6 to 26, 32 to 52, 67 to 87, 108 to 128, 130 to 150, 174 to 194, 201 to 221, 245 to 265, 282 to 302, 308 to 328, and 344 to 364; these read MSFI…YLNV, LLMA…NFII, VAAV…PLFA, AINV…IGFL, AVFA…IFKS, ITFF…PKLF, LYDG…ILAV, IVFP…AIIP, FIAS…VPII, LGMG…LSIP, and TYLG…GIIL.

This sequence belongs to the UPF0718 family.

The protein resides in the cell membrane. The polypeptide is UPF0718 protein MJ0584 (Methanocaldococcus jannaschii (strain ATCC 43067 / DSM 2661 / JAL-1 / JCM 10045 / NBRC 100440) (Methanococcus jannaschii)).